We begin with the raw amino-acid sequence, 814 residues long: Rho GTPase-activating protein 26 (814 aa).

In terms of domain architecture, BAR spans 7 to 262 (EFSDCCLDSP…MKENPLEHKT (256 aa)). A PH domain is found at 265–369 (PYTMEGYLYV…WMEAMDGREP (105 aa)). Residues 383-568 (AQLDSIGFSI…ILIENHEKIF (186 aa)) enclose the Rho-GAP domain. 2 disordered regions span residues 584-618 (SRKKSSDSKPPSCSKRPLTLFHAVPSTEKQEQRNS) and 638-696 (SSSL…SSDS). Composition is skewed to low complexity over residues 591 to 600 (SKPPSCSKRP) and 638 to 661 (SSSLQPNLNSSDSNLDVVKPSRPS). A compositionally biased stretch (pro residues) spans 662-672 (SLPPNPSPTSP). The residue at position 668 (S668) is a Phosphoserine. T670 is subject to Phosphothreonine. S671 carries the phosphoserine modification. Low complexity predominate over residues 673-696 (LSPSWPMFSAPSSPMPTSSTSSDS). Residues 756–814 (TPFRKAKALYACQAEHDSELSFTAGTVFDNVHPSQEPGWLEGTLNGKTGLIPENYVEFL) form the SH3 domain.

As to quaternary structure, interacts with NYAP1, NYAP2 and MYO16. Interacts with MICAL1 and WDR44. Binds to the C-terminus of PTK2/FAK1. Phosphorylated in a PINK1-dependent fashion promoting retrograde mitochondrial trafficking and clustering.

The protein localises to the cell junction. The protein resides in the focal adhesion. Its subcellular location is the cytoplasm. It is found in the cytoskeleton. It localises to the endosome membrane. Its function is as follows. GTPase-activating protein for RHOA and CDC42. Facilitates mitochondrial quality control by promoting Parkin-mediated recruitment of autophagosomes to damaged mitochondria. Associates with MICAL1 on the endosomal membrane to promote Rab8-Rab10-dependent tubule extension. After dissociation of MICAL1, recruits WDR44 which connects the endoplasmic reticulum (ER) with the endosomal tubule, thereby participating in the export of a subset of neosynthesized proteins. The sequence is that of Rho GTPase-activating protein 26 (Arhgap26) from Mus musculus (Mouse).